The primary structure comprises 327 residues: o-succinylbenzoate synthase (327 aa).

Residue Lys-110 is the Proton donor of the active site. Residues Asp-138, Glu-165, and Asp-188 each coordinate Mg(2+). The active-site Proton acceptor is the Lys-212.

This sequence belongs to the mandelate racemase/muconate lactonizing enzyme family. MenC type 1 subfamily. Requires a divalent metal cation as cofactor.

The catalysed reaction is (1R,6R)-6-hydroxy-2-succinyl-cyclohexa-2,4-diene-1-carboxylate = 2-succinylbenzoate + H2O. It participates in quinol/quinone metabolism; 1,4-dihydroxy-2-naphthoate biosynthesis; 1,4-dihydroxy-2-naphthoate from chorismate: step 4/7. Its pathway is quinol/quinone metabolism; menaquinone biosynthesis. Its function is as follows. Converts 2-succinyl-6-hydroxy-2,4-cyclohexadiene-1-carboxylate (SHCHC) to 2-succinylbenzoate (OSB). The chain is o-succinylbenzoate synthase from Mycobacterium marinum (strain ATCC BAA-535 / M).